We begin with the raw amino-acid sequence, 345 residues long: N-acetyl-gamma-glutamyl-phosphate reductase (345 aa).

Cys149 is a catalytic residue.

The protein belongs to the NAGSA dehydrogenase family. Type 1 subfamily.

Its subcellular location is the cytoplasm. It catalyses the reaction N-acetyl-L-glutamate 5-semialdehyde + phosphate + NADP(+) = N-acetyl-L-glutamyl 5-phosphate + NADPH + H(+). Its pathway is amino-acid biosynthesis; L-arginine biosynthesis; N(2)-acetyl-L-ornithine from L-glutamate: step 3/4. Catalyzes the NADPH-dependent reduction of N-acetyl-5-glutamyl phosphate to yield N-acetyl-L-glutamate 5-semialdehyde. The sequence is that of N-acetyl-gamma-glutamyl-phosphate reductase from Bacillus cereus (strain 03BB102).